The chain runs to 142 residues: Large ribosomal subunit protein uL13 (142 aa).

The protein belongs to the universal ribosomal protein uL13 family. As to quaternary structure, part of the 50S ribosomal subunit.

Functionally, this protein is one of the early assembly proteins of the 50S ribosomal subunit, although it is not seen to bind rRNA by itself. It is important during the early stages of 50S assembly. This is Large ribosomal subunit protein uL13 from Pectobacterium atrosepticum (strain SCRI 1043 / ATCC BAA-672) (Erwinia carotovora subsp. atroseptica).